Reading from the N-terminus, the 896-residue chain is DNA mismatch repair protein MutS (896 aa).

ATP is bound at residue 618–625 (GPNMSGKS). Positions 805-825 (GKESTKTGKGENKNISHKTES) are enriched in basic and acidic residues. The disordered stretch occupies residues 805-826 (GKESTKTGKGENKNISHKTESD).

Belongs to the DNA mismatch repair MutS family.

This protein is involved in the repair of mismatches in DNA. It is possible that it carries out the mismatch recognition step. This protein has a weak ATPase activity. This is DNA mismatch repair protein MutS from Halothermothrix orenii (strain H 168 / OCM 544 / DSM 9562).